The primary structure comprises 148 residues: Homoprotocatechuate degradative operon repressor (148 aa).

The HTH marR-type domain occupies 2-134 (HDSLTIALLQ…LTHLLEEFIA (133 aa)).

Functionally, repressor for the homoprotocatechuate catabolic pathway hpc operon. This Escherichia coli protein is Homoprotocatechuate degradative operon repressor (hpcR).